The chain runs to 618 residues: Delta-like protein 3 (618 aa).

The signal sequence occupies residues 1-26 (MVSPRMSGLLSQTVILALIFLPQTRP). The Extracellular portion of the chain corresponds to 27-492 (AGVFELQIHS…LRPGDPQRYL (466 aa)). The 40-residue stretch at 176–215 (ARCEPPAVGTACTRLCRPRSAPSRCGPGLRPCAPLEDECE) folds into the DSL domain. 6 consecutive EGF-like domains span residues 216-249 (APLVCRAGCSPEHGFCEQPGECRCLEGWTGPLCT), 274-310 (GPGPCDGNPCANGGSCSETPRSFECTCPRGFYGLRCE), 312-351 (SGVTCADGPCFNGGLCVGGADPDSAYICHCPPGFQGSNCE), 353-389 (RVDRCSLQPCRNGGLCLDLGHALRCRCRAGFAGPRCE), 391-427 (DLDDCAGRACANGGTCVEGGGAHRCSCALGFGGRDCR), and 429-465 (RADPCAARPCAHGGRCYAHFSGLVCACAPGYMGARCE). 18 cysteine pairs are disulfide-bonded: cysteine 220–cysteine 231, cysteine 224–cysteine 237, cysteine 239–cysteine 248, cysteine 278–cysteine 289, cysteine 283–cysteine 298, cysteine 300–cysteine 309, cysteine 316–cysteine 327, cysteine 321–cysteine 339, cysteine 341–cysteine 350, cysteine 357–cysteine 368, cysteine 362–cysteine 377, cysteine 379–cysteine 388, cysteine 395–cysteine 406, cysteine 400–cysteine 415, cysteine 417–cysteine 426, cysteine 433–cysteine 444, cysteine 438–cysteine 453, and cysteine 455–cysteine 464. The chain crosses the membrane as a helical span at residues 493–513 (LPPALGLLVAAGVAGAALLLV). At 514–618 (HVRRRGHSQD…PYPSSILSVK (105 aa)) the chain is on the cytoplasmic side. A compositionally biased stretch (polar residues) spans 546–562 (NLRTQEGSGDGPSSSVD). The segment at 546 to 566 (NLRTQEGSGDGPSSSVDWNRP) is disordered.

As to quaternary structure, can bind and activate Notch-1 or another Notch receptor. Post-translationally, ubiquitinated by MIB (MIB1 or MIB2), leading to its endocytosis and subsequent degradation.

The protein localises to the membrane. Functionally, inhibits primary neurogenesis. May be required to divert neurons along a specific differentiation pathway. Plays a role in the formation of somite boundaries during segmentation of the paraxial mesoderm. This chain is Delta-like protein 3 (DLL3), found in Homo sapiens (Human).